A 307-amino-acid chain; its full sequence is Nucleotide-binding protein AAur_2084 (307 aa).

Residues 1–21 (MDEATAKSGTEQDGLTPVKPP) are disordered. Residue 30 to 37 (GMSGAGRS) coordinates ATP. 81 to 84 (DVRS) serves as a coordination point for GTP.

The protein belongs to the RapZ-like family.

Displays ATPase and GTPase activities. The chain is Nucleotide-binding protein AAur_2084 from Paenarthrobacter aurescens (strain TC1).